A 205-amino-acid chain; its full sequence is Ribosomal RNA small subunit methyltransferase G (205 aa).

S-adenosyl-L-methionine-binding positions include Gly66, Phe71, 119-120 (IE), and Arg135.

Belongs to the methyltransferase superfamily. RNA methyltransferase RsmG family.

It is found in the cytoplasm. The enzyme catalyses guanosine(527) in 16S rRNA + S-adenosyl-L-methionine = N(7)-methylguanosine(527) in 16S rRNA + S-adenosyl-L-homocysteine. In terms of biological role, specifically methylates the N7 position of guanine in position 527 of 16S rRNA. This Rhizobium etli (strain CIAT 652) protein is Ribosomal RNA small subunit methyltransferase G.